The following is a 666-amino-acid chain: DNA mismatch repair protein MutL (666 aa).

Belongs to the DNA mismatch repair MutL/HexB family.

In terms of biological role, this protein is involved in the repair of mismatches in DNA. It is required for dam-dependent methyl-directed DNA mismatch repair. May act as a 'molecular matchmaker', a protein that promotes the formation of a stable complex between two or more DNA-binding proteins in an ATP-dependent manner without itself being part of a final effector complex. The polypeptide is DNA mismatch repair protein MutL (Clostridium botulinum (strain Kyoto / Type A2)).